The sequence spans 163 residues: General stress protein 16O (163 aa).

Residues 19–30 (QKELSGEKKETE) are compositionally biased toward basic and acidic residues. 2 disordered regions span residues 19–55 (QKEL…TLVT) and 115–163 (ADVE…QDSK). The dksA C4-type; degenerate zinc finger occupies 89 to 123 (CEKTGQEIPYERLEAVPYARMTVEAQADVEDDLET). Over residues 127-146 (SYEREFHEQVKDLSNKETID) the composition is skewed to basic and acidic residues.

This chain is General stress protein 16O (yocK), found in Bacillus subtilis (strain 168).